Consider the following 222-residue polypeptide: Peptide methionine sulfoxide reductase MsrA (222 aa).

C55 is a catalytic residue.

This sequence belongs to the MsrA Met sulfoxide reductase family.

It carries out the reaction L-methionyl-[protein] + [thioredoxin]-disulfide + H2O = L-methionyl-(S)-S-oxide-[protein] + [thioredoxin]-dithiol. It catalyses the reaction [thioredoxin]-disulfide + L-methionine + H2O = L-methionine (S)-S-oxide + [thioredoxin]-dithiol. Its function is as follows. Has an important function as a repair enzyme for proteins that have been inactivated by oxidation. Catalyzes the reversible oxidation-reduction of methionine sulfoxide in proteins to methionine. The sequence is that of Peptide methionine sulfoxide reductase MsrA from Streptomyces griseus subsp. griseus (strain JCM 4626 / CBS 651.72 / NBRC 13350 / KCC S-0626 / ISP 5235).